Reading from the N-terminus, the 211-residue chain is 3-demethoxyubiquinol 3-hydroxylase (211 aa).

Fe cation-binding residues include E60, E90, H93, E142, E174, and H177.

It belongs to the COQ7 family. Requires Fe cation as cofactor.

It is found in the cell membrane. The catalysed reaction is a 5-methoxy-2-methyl-3-(all-trans-polyprenyl)benzene-1,4-diol + AH2 + O2 = a 3-demethylubiquinol + A + H2O. It functions in the pathway cofactor biosynthesis; ubiquinone biosynthesis. Functionally, catalyzes the hydroxylation of 2-nonaprenyl-3-methyl-6-methoxy-1,4-benzoquinol during ubiquinone biosynthesis. This chain is 3-demethoxyubiquinol 3-hydroxylase, found in Francisella tularensis subsp. holarctica (strain FTNF002-00 / FTA).